A 349-amino-acid chain; its full sequence is Ornithine carbamoyltransferase, mitochondrial (349 aa).

Carbamoyl phosphate contacts are provided by residues 73–76 (STRT), R124, H151, and Q154. L-ornithine is bound by residues N195, D261, S265, and M266. C303 serves as the catalytic Proton acceptor. Carbamoyl phosphate is bound by residues 303–304 (CL) and R330.

Belongs to the aspartate/ornithine carbamoyltransferase superfamily. OTCase family. In terms of assembly, homotrimer.

Its subcellular location is the mitochondrion matrix. It carries out the reaction carbamoyl phosphate + L-ornithine = L-citrulline + phosphate + H(+). It functions in the pathway amino-acid biosynthesis; L-arginine biosynthesis; L-arginine from L-ornithine and carbamoyl phosphate: step 1/3. The chain is Ornithine carbamoyltransferase, mitochondrial from Coccidioides immitis (strain RS) (Valley fever fungus).